Reading from the N-terminus, the 550-residue chain is Arginine--tRNA ligase (550 aa).

The 'HIGH' region motif lies at 130 to 140; it reads ANPTGPIHIGG.

This sequence belongs to the class-I aminoacyl-tRNA synthetase family. As to quaternary structure, monomer.

It localises to the cytoplasm. The catalysed reaction is tRNA(Arg) + L-arginine + ATP = L-arginyl-tRNA(Arg) + AMP + diphosphate. The chain is Arginine--tRNA ligase from Mycolicibacterium gilvum (strain PYR-GCK) (Mycobacterium gilvum (strain PYR-GCK)).